The primary structure comprises 278 residues: HTH-type transcriptional activator RhaS (278 aa).

The HTH araC/xylS-type domain occupies 174–272; the sequence is NLLLAWLEDH…NWSPRDIRQG (99 aa). 2 consecutive DNA-binding regions (H-T-H motif) follow at residues 191–212 and 239–262; these read DAVA…KQQT and VTDI…RREF.

In terms of assembly, binds DNA as a dimer.

The protein localises to the cytoplasm. In terms of biological role, activates expression of the rhaBAD and rhaT operons. The sequence is that of HTH-type transcriptional activator RhaS from Shigella flexneri serotype 5b (strain 8401).